A 146-amino-acid chain; its full sequence is Large ribosomal subunit protein uL15 (146 aa).

Residues 1 to 10 (MTIKLHDLKP) show a composition bias toward basic and acidic residues. The interval 1–52 (MTIKLHDLKPARGSKTPRTRVGRGEGSKGKTAGRGTKGTKARKNVPVTFEGG) is disordered.

Belongs to the universal ribosomal protein uL15 family. As to quaternary structure, part of the 50S ribosomal subunit.

Its function is as follows. Binds to the 23S rRNA. The sequence is that of Large ribosomal subunit protein uL15 from Mycolicibacterium paratuberculosis (strain ATCC BAA-968 / K-10) (Mycobacterium paratuberculosis).